Reading from the N-terminus, the 72-residue chain is Hydrophobic protein OSR8 (72 aa).

The next 2 helical transmembrane spans lie at 9-29 (FLEI…RFGC) and 39-59 (LLTI…LVAL).

This sequence belongs to the UPF0057 (PMP3) family.

It is found in the membrane. This chain is Hydrophobic protein OSR8 (OSR8), found in Oryza sativa subsp. japonica (Rice).